We begin with the raw amino-acid sequence, 348 residues long: Protein RecA (348 aa).

64 to 71 (GPESSGKT) is an ATP binding site. The interval 328 to 348 (DTGGAAPAQEDEAQAQEELEF) is disordered. The span at 336-348 (QEDEAQAQEELEF) shows a compositional bias: acidic residues.

Belongs to the RecA family.

It is found in the cytoplasm. Can catalyze the hydrolysis of ATP in the presence of single-stranded DNA, the ATP-dependent uptake of single-stranded DNA by duplex DNA, and the ATP-dependent hybridization of homologous single-stranded DNAs. It interacts with LexA causing its activation and leading to its autocatalytic cleavage. The chain is Protein RecA from Bacillus licheniformis (strain ATCC 14580 / DSM 13 / JCM 2505 / CCUG 7422 / NBRC 12200 / NCIMB 9375 / NCTC 10341 / NRRL NRS-1264 / Gibson 46).